The sequence spans 406 residues: MADGYEDLREDELPGPAYEGYESAELACPAERSGHVAVSDGRHMFVWGGYKSNQVRGLYDFYLPREELWIYNMETGRWKKINTEGDVPPSMSGSCAVCVDRVLYLFGGHHSRGNTNKFYMLDSRSTDRVLHWERIDCQGVPPSSKDKLGVWVYKNKLIFFGGYGYLPEDKVLGTFEFDETSFWNSSHPRGWNDHVHILDTETFIWSQPITTGKPPSPRAAHACATVGNKGFVFGGRYRDARMNDLHYLNLDTWEWNELIPQGICPVGRSWHSLTPVSSDHLFLFGGFTTDKQPLSDAWTYCISKNEWIKFNHPHTEKPRLWHTACASDEGEVIVFGGCANNLLVHHRAAHSNEILIFSVQPKSLVRLSLEAVICFKEMLANSWNCLPKHLLHSVNQRFGSNNTSGS.

6 Kelch repeats span residues 31–85 (ERSG…NTEG), 92–136 (SGSC…ERID), 148–207 (LGVW…IWSQ), 221–259 (HACA…NELI), 271–311 (HSLT…IKFN), and 322–359 (HTAC…IFSV).

In terms of assembly, component of a CRL2(KLHDC2) E3 ubiquitin-protein ligase complex, also named ECS(KLHDC2) complex, composed of CUL2, Elongin BC (ELOB and ELOC), RBX1 and substrate-specific adapter KLHDC2. May form oligomers as a KLHDC2-ELOB-ELOC complex; this interaction is autoinhibitory for the E3 ligase complex as the substrate-binding site of KLHDC2 is blocked in the oligomer. Interacts with CREB3; interaction is direct and specific as it does not interact with CREB1, ATF4, ATF6, JUN, FOS, CEBPA or herpes simplex virus transactivator VP16. In terms of processing, autoubiquitinated by the CRL2(KLHDC2) E3 ligase complex.

Its subcellular location is the nucleus. Its pathway is protein modification; protein ubiquitination. Its function is as follows. Substrate-recognition component of a Cul2-RING (CRL2) E3 ubiquitin-protein ligase complex of the DesCEND (destruction via C-end degrons) pathway, which recognizes a C-degron located at the extreme C terminus of target proteins, leading to their ubiquitination and degradation. The C-degron recognized by the DesCEND pathway is usually a motif of less than ten residues and can be present in full-length proteins, truncated proteins or proteolytically cleaved forms. The CRL2(KLHDC2) complex specifically recognizes proteins with a diglycine (Gly-Gly) at the C-terminus, leading to their ubiquitination and degradation. The CRL2(KLHDC2) complex mediates ubiquitination and degradation of truncated SELENOK and SELENOS selenoproteins produced by failed UGA/Sec decoding, which end with a diglycine. The CRL2(KLHDC2) complex also recognizes proteolytically cleaved proteins ending with Gly-Gly, such as the N-terminal fragment of USP1, leading to their degradation. May also act as an indirect repressor of CREB3-mediated transcription by interfering with CREB3-DNA-binding. This is Kelch domain-containing protein 2 from Bos taurus (Bovine).